A 351-amino-acid polypeptide reads, in one-letter code: UDP-3-O-acylglucosamine N-acyltransferase (351 aa).

His240 functions as the Proton acceptor in the catalytic mechanism.

The protein belongs to the transferase hexapeptide repeat family. LpxD subfamily. Homotrimer.

It carries out the reaction a UDP-3-O-[(3R)-3-hydroxyacyl]-alpha-D-glucosamine + a (3R)-hydroxyacyl-[ACP] = a UDP-2-N,3-O-bis[(3R)-3-hydroxyacyl]-alpha-D-glucosamine + holo-[ACP] + H(+). It participates in bacterial outer membrane biogenesis; LPS lipid A biosynthesis. Its function is as follows. Catalyzes the N-acylation of UDP-3-O-acylglucosamine using 3-hydroxyacyl-ACP as the acyl donor. Is involved in the biosynthesis of lipid A, a phosphorylated glycolipid that anchors the lipopolysaccharide to the outer membrane of the cell. The chain is UDP-3-O-acylglucosamine N-acyltransferase from Pseudomonas syringae pv. tomato (strain ATCC BAA-871 / DC3000).